The primary structure comprises 76 residues: Kappa-actitoxin-Avd4o (76 aa).

A signal peptide spans 1 to 19 (MNKALFLSLVVLCAAVVFA). A propeptide spanning residues 20–33 (AEDLQKAKHAPFKL) is cleaved from the precursor. 3 disulfide bridges follow: Cys-37/Cys-72, Cys-39/Cys-65, and Cys-55/Cys-73.

It belongs to the sea anemone type 3 (BDS) potassium channel toxin family. In terms of tissue distribution, experimental results show no expression in the ectodermal tissue from the distal and proximal tentacles, body wall, and oral disk. Since paralogs are expressed in this tissue, an expression of this toxin in this tissue is probable. The negative results could be explained by the very low abundance of EST sequences.

Its subcellular location is the secreted. The protein localises to the nematocyst. Its function is as follows. Blocks Kv3 voltage-gated potassium channels. Reduces blood pressure. In Anemonia viridis (Snakelocks anemone), this protein is Kappa-actitoxin-Avd4o.